Consider the following 235-residue polypeptide: Sugar fermentation stimulation protein homolog (235 aa).

It belongs to the SfsA family.

In Ectopseudomonas mendocina (strain ymp) (Pseudomonas mendocina), this protein is Sugar fermentation stimulation protein homolog.